The following is a 1067-amino-acid chain: Tricorn protease homolog 1 (1067 aa).

The tract at residues 518–551 (TTPSPFGPQRHGRPFETPDREETPDSEGTPTTRI) is disordered. The span at 530–540 (RPFETPDREET) shows a compositional bias: basic and acidic residues. His740 serves as the catalytic Charge relay system. The interval 754-851 (RQGLLGADLS…HAVVVPLADE (98 aa)) is PDZ-like. Gly914 is a substrate binding site. Ser961 serves as the catalytic Nucleophile. Glu1019 (charge relay system) is an active-site residue.

The protein belongs to the peptidase S41B family. In terms of assembly, forms a homohexameric complex; it is not known if it assembles into higher-order structures.

The protein localises to the cytoplasm. Stimulated by MgCl2. Degrades oligopeptides in a sequential manner. In Streptomyces coelicolor (strain ATCC BAA-471 / A3(2) / M145), this protein is Tricorn protease homolog 1 (tri1).